Consider the following 461-residue polypeptide: Kynurenine 3-monooxygenase (461 aa).

The next 2 membrane-spanning stretches (helical) occupy residues 395–415 (TIMN…VTFS) and 432–452 (ILSR…AAGI).

Belongs to the aromatic-ring hydroxylase family. KMO subfamily. FAD serves as cofactor.

It localises to the mitochondrion. The protein resides in the membrane. The enzyme catalyses L-kynurenine + NADPH + O2 + H(+) = 3-hydroxy-L-kynurenine + NADP(+) + H2O. The protein operates within cofactor biosynthesis; NAD(+) biosynthesis; quinolinate from L-kynurenine: step 1/3. In terms of biological role, catalyzes the hydroxylation of L-kynurenine (L-Kyn) to form 3-hydroxy-L-kynurenine (L-3OHKyn). Required for synthesis of quinolinic acid. This Caenorhabditis elegans protein is Kynurenine 3-monooxygenase.